The following is a 210-amino-acid chain: Ribosomal RNA small subunit methyltransferase G (210 aa).

S-adenosyl-L-methionine is bound by residues glycine 77, phenylalanine 82, 100–102 (ERS), 128–129 (VE), and arginine 141.

Belongs to the methyltransferase superfamily. RNA methyltransferase RsmG family.

The protein resides in the cytoplasm. Its function is as follows. Specifically methylates the N7 position of a guanine in 16S rRNA. The chain is Ribosomal RNA small subunit methyltransferase G from Borrelia duttonii (strain Ly).